A 133-amino-acid chain; its full sequence is MKPARFAPRAARKGNPATGLAAYRLGLRAETLAVLLLRLKGYRVVARRLKTPAGEIDLVVRRGRALAVVEVKARGEGDAAAEALLPRQQRRLERAAAHLLGRYPHFADLDLRFDVVLIVPRRWPRHLADAWRP.

The protein belongs to the UPF0102 family.

This Parvibaculum lavamentivorans (strain DS-1 / DSM 13023 / NCIMB 13966) protein is UPF0102 protein Plav_3586.